Here is a 505-residue protein sequence, read N- to C-terminus: Glycerol kinase (505 aa).

Residue threonine 14 participates in ADP binding. Residues threonine 14, threonine 15, and serine 16 each contribute to the ATP site. Residue threonine 14 coordinates sn-glycerol 3-phosphate. Arginine 18 is a binding site for ADP. Arginine 84, glutamate 85, tyrosine 136, and aspartate 246 together coordinate sn-glycerol 3-phosphate. Residues arginine 84, glutamate 85, tyrosine 136, aspartate 246, and glutamine 247 each contribute to the glycerol site. ADP-binding residues include threonine 268 and glycine 311. ATP contacts are provided by threonine 268, glycine 311, glutamine 315, and glycine 412. ADP contacts are provided by glycine 412 and asparagine 416.

This sequence belongs to the FGGY kinase family.

The catalysed reaction is glycerol + ATP = sn-glycerol 3-phosphate + ADP + H(+). It participates in polyol metabolism; glycerol degradation via glycerol kinase pathway; sn-glycerol 3-phosphate from glycerol: step 1/1. Inhibited by fructose 1,6-bisphosphate (FBP). Functionally, key enzyme in the regulation of glycerol uptake and metabolism. Catalyzes the phosphorylation of glycerol to yield sn-glycerol 3-phosphate. This is Glycerol kinase from Vibrio parahaemolyticus serotype O3:K6 (strain RIMD 2210633).